Consider the following 505-residue polypeptide: RNA-splicing ligase RtcB homolog (505 aa).

Residues D119, C122, H227, and H259 each coordinate Mn(2+). 226–230 (NHYAE) contributes to the GMP binding site. The residue at position 300 (S300) is a Phosphoserine. H353 lines the Mn(2+) pocket. Residues 353 to 354 (HN), 402 to 405 (GGTM), S409, and 428 to 431 (HGAG) contribute to the GMP site. Residue H428 is the GMP-histidine intermediate of the active site. K496 is covalently cross-linked (Glycyl lysine isopeptide (Lys-Gly) (interchain with G-Cter in SUMO2)). K504 is a binding site for GMP.

It belongs to the RtcB family. In terms of assembly, catalytic component of the tRNA-splicing ligase complex. Mn(2+) is required as a cofactor.

It is found in the nucleus. The protein resides in the cytoplasm. It carries out the reaction a 3'-end 3'-phospho-ribonucleotide-RNA + a 5'-end dephospho-ribonucleoside-RNA + GTP = a ribonucleotidyl-ribonucleotide-RNA + GMP + diphosphate. It catalyses the reaction a 3'-end 2',3'-cyclophospho-ribonucleotide-RNA + a 5'-end dephospho-ribonucleoside-RNA + GTP + H2O = a ribonucleotidyl-ribonucleotide-RNA + GMP + diphosphate + H(+). Catalytic subunit of the tRNA-splicing ligase complex that acts by directly joining spliced tRNA halves to mature-sized tRNAs by incorporating the precursor-derived splice junction phosphate into the mature tRNA as a canonical 3',5'-phosphodiester. May act as an RNA ligase with broad substrate specificity, and may function toward other RNAs. The sequence is that of RNA-splicing ligase RtcB homolog from Bos taurus (Bovine).